We begin with the raw amino-acid sequence, 204 residues long: GTP cyclohydrolase-2 (204 aa).

49-53 serves as a coordination point for GTP; it reads RIHSE. Residues Cys54, Cys65, and Cys67 each coordinate Zn(2+). Residues Gln70, 92–94, and Thr114 contribute to the GTP site; that span reads EGR. The Proton acceptor role is filled by Asp126. Catalysis depends on Arg128, which acts as the Nucleophile. Residues Thr149 and Lys154 each contribute to the GTP site.

It belongs to the GTP cyclohydrolase II family. It depends on Zn(2+) as a cofactor.

The catalysed reaction is GTP + 4 H2O = 2,5-diamino-6-hydroxy-4-(5-phosphoribosylamino)-pyrimidine + formate + 2 phosphate + 3 H(+). It participates in cofactor biosynthesis; riboflavin biosynthesis; 5-amino-6-(D-ribitylamino)uracil from GTP: step 1/4. Its function is as follows. Catalyzes the conversion of GTP to 2,5-diamino-6-ribosylamino-4(3H)-pyrimidinone 5'-phosphate (DARP), formate and pyrophosphate. The protein is GTP cyclohydrolase-2 of Shewanella baltica (strain OS223).